We begin with the raw amino-acid sequence, 106 residues long: Small ribosomal subunit protein uS10 (106 aa).

The protein belongs to the universal ribosomal protein uS10 family. Part of the 30S ribosomal subunit.

In terms of biological role, involved in the binding of tRNA to the ribosomes. In Synechococcus sp. (strain CC9902), this protein is Small ribosomal subunit protein uS10.